The sequence spans 509 residues: Heat shock 70 kDa protein 14 (509 aa).

This sequence belongs to the heat shock protein 70 family. Component of ribosome-associated complex (RAC), a heterodimer composed of Hsp70/DnaK-type chaperone HSPA14 and Hsp40/DnaJ-type chaperone DNAJC2.

The protein localises to the cytoplasm. Its subcellular location is the cytosol. Its function is as follows. Component of the ribosome-associated complex (RAC), a complex involved in folding or maintaining nascent polypeptides in a folding-competent state. In the RAC complex, binds to the nascent polypeptide chain, while DNAJC2 stimulates its ATPase activity. The sequence is that of Heat shock 70 kDa protein 14 (Hspa14) from Mus musculus (Mouse).